The primary structure comprises 25 residues: Hypotensin-2 (25 aa).

A disordered region spans residues 1–25 (AEIDFSGIPEDIIKEIKETNAKPPA). Serine 6 is subject to Phosphoserine. Basic and acidic residues predominate over residues 11 to 25 (DIIKEIKETNAKPPA).

This sequence belongs to the non-disulfide-bridged peptide (NDBP) superfamily. As to expression, expressed by the venom gland.

The protein resides in the secreted. In terms of biological role, agonist of the B2 bradykinin receptor (BDKRB2). Potentiates the hypotensive effect of bradykinin (BK) and induces a direct vasorelaxing effect, independently of BK, by endothelium- and nitric oxide (NO)-dependent mechanisms in rat aortic ring preparations. Does not inhibit the angiotensin-converting enzyme (ACE). Also exerts proangiogenic, antiinflammatory, and antifibrogenic activities. Does not inhibit the angiotensin-converting enzyme (ACE) but weakly increases its activity, and weakly inhibits neprilysin (NEP) in a non-competitive manner. Exerts intermediate cytotoxicity and pro-inflammatory effects on mouse macrophages, and increases the phagocytic activity of these murine cells. Functionally, presents weak hemolytic activity at physiological concentrations (micromolar range), and weak lactate dehydrogenase (LDH) release from mast cells. Does not induce mast cell degranulation, and antimicrobial effects. In vivo, causes intense pain (but no edema formation), when injected in mice hind paws. Also induces discomfort and anxiety in mice, as it moderately diminishes locomotion and moderately increases rearing behavior. This chain is Hypotensin-2, found in Tityus serrulatus (Brazilian scorpion).